We begin with the raw amino-acid sequence, 178 residues long: Epididymal-specific lipocalin-9 (178 aa).

Positions M1–A16 are cleaved as a signal peptide. N-linked (GlcNAc...) asparagine glycans are attached at residues N46, N68, and N129. Cysteines 83 and 176 form a disulfide.

The protein belongs to the calycin superfamily. Lipocalin family. As to expression, expressed in epididymis. Not detected in all other tissues tested.

Its subcellular location is the secreted. This Mus musculus (Mouse) protein is Epididymal-specific lipocalin-9 (Lcn9).